The sequence spans 295 residues: GTPase Era (295 aa).

Residues 7-176 (KTISVCIIGR…IKSKAKVSPW (170 aa)) enclose the Era-type G domain. The segment at 15-22 (GRPNSGKS) is G1. A GTP-binding site is contributed by 15–22 (GRPNSGKS). The G2 stretch occupies residues 41 to 45 (QTTRS). The G3 stretch occupies residues 62–65 (DTPG). GTP contacts are provided by residues 62-66 (DTPGI) and 124-127 (NKID). The tract at residues 124-127 (NKID) is G4. The tract at residues 152-154 (ISA) is G5. One can recognise a KH type-2 domain in the interval 204-281 (LQQELPYKLT…HLFLFVKVHA (78 aa)).

The protein belongs to the TRAFAC class TrmE-Era-EngA-EngB-Septin-like GTPase superfamily. Era GTPase family. As to quaternary structure, monomer.

Its subcellular location is the cytoplasm. It is found in the cell inner membrane. Functionally, an essential GTPase that binds both GDP and GTP, with rapid nucleotide exchange. Plays a role in 16S rRNA processing and 30S ribosomal subunit biogenesis and possibly also in cell cycle regulation and energy metabolism. The sequence is that of GTPase Era from Rickettsia prowazekii (strain Madrid E).